We begin with the raw amino-acid sequence, 212 residues long: Uridine kinase (212 aa).

13–20 (GASASGKS) provides a ligand contact to ATP.

This sequence belongs to the uridine kinase family.

Its subcellular location is the cytoplasm. The enzyme catalyses uridine + ATP = UMP + ADP + H(+). It carries out the reaction cytidine + ATP = CMP + ADP + H(+). It participates in pyrimidine metabolism; CTP biosynthesis via salvage pathway; CTP from cytidine: step 1/3. It functions in the pathway pyrimidine metabolism; UMP biosynthesis via salvage pathway; UMP from uridine: step 1/1. The protein is Uridine kinase of Shewanella frigidimarina (strain NCIMB 400).